A 185-amino-acid chain; its full sequence is Ribosome-recycling factor (185 aa).

This sequence belongs to the RRF family.

The protein resides in the cytoplasm. In terms of biological role, responsible for the release of ribosomes from messenger RNA at the termination of protein biosynthesis. May increase the efficiency of translation by recycling ribosomes from one round of translation to another. The chain is Ribosome-recycling factor from Corynebacterium urealyticum (strain ATCC 43042 / DSM 7109).